Reading from the N-terminus, the 100-residue chain is Aspartyl/glutamyl-tRNA(Asn/Gln) amidotransferase subunit C (100 aa).

This sequence belongs to the GatC family. Heterotrimer of A, B and C subunits.

It carries out the reaction L-glutamyl-tRNA(Gln) + L-glutamine + ATP + H2O = L-glutaminyl-tRNA(Gln) + L-glutamate + ADP + phosphate + H(+). It catalyses the reaction L-aspartyl-tRNA(Asn) + L-glutamine + ATP + H2O = L-asparaginyl-tRNA(Asn) + L-glutamate + ADP + phosphate + 2 H(+). In terms of biological role, allows the formation of correctly charged Asn-tRNA(Asn) or Gln-tRNA(Gln) through the transamidation of misacylated Asp-tRNA(Asn) or Glu-tRNA(Gln) in organisms which lack either or both of asparaginyl-tRNA or glutaminyl-tRNA synthetases. The reaction takes place in the presence of glutamine and ATP through an activated phospho-Asp-tRNA(Asn) or phospho-Glu-tRNA(Gln). The chain is Aspartyl/glutamyl-tRNA(Asn/Gln) amidotransferase subunit C from Rickettsia peacockii (strain Rustic).